Consider the following 396-residue polypeptide: Gamma-D-glutamyl-L-diamino acid endopeptidase 1 (396 aa).

LysM domains follow at residues 1–45 (MDIL…RIQI) and 51–95 (TSYT…TIQV). Residues 108 to 394 (QNYDYSMMMN…EALGIFLAGL (287 aa)) form the Peptidase M14 domain. Zn(2+)-binding residues include histidine 162 and glutamate 165. Aspartate 255 serves as a coordination point for substrate. Histidine 307 is a Zn(2+) binding site. Tyrosine 347 functions as the Proton donor in the catalytic mechanism. The Proton donor/acceptor role is filled by glutamate 366.

Belongs to the peptidase M14 family. Zn(2+) is required as a cofactor.

The catalysed reaction is Hydrolysis of gamma-D-glutamyl bonds to the L-terminus (position 7) of meso-diaminopimelic acid (meso-A2pm) in 7-(L-Ala-gamma-D-Glu)-meso-A2pm and 7-(L-Ala-gamma-D-Glu)-7-(D-Ala)-meso-A2pm. It is required that the D-terminal amino and carboxy groups of meso-A2pm are unsubstituted.. In terms of biological role, an endopeptidase which hydrolyzes the gamma-D-Glu-(L)meso-diaminopimelic acid bond of L-Ala-gamma-D-Glu-(L)meso-diaminopimelic acid and L-Ala-gamma-D-Glu-(L)meso-diaminopimelic acid(L)-D-Ala peptides. It is active on spore cortex peptidoglycan. In Lysinibacillus sphaericus (Bacillus sphaericus), this protein is Gamma-D-glutamyl-L-diamino acid endopeptidase 1.